We begin with the raw amino-acid sequence, 241 residues long: Ubiquinone biosynthesis O-methyltransferase (241 aa).

The S-adenosyl-L-methionine site is built by arginine 46, glycine 66, aspartate 87, and methionine 131.

Belongs to the methyltransferase superfamily. UbiG/COQ3 family.

The catalysed reaction is a 3-demethylubiquinol + S-adenosyl-L-methionine = a ubiquinol + S-adenosyl-L-homocysteine + H(+). The enzyme catalyses a 3-(all-trans-polyprenyl)benzene-1,2-diol + S-adenosyl-L-methionine = a 2-methoxy-6-(all-trans-polyprenyl)phenol + S-adenosyl-L-homocysteine + H(+). It functions in the pathway cofactor biosynthesis; ubiquinone biosynthesis. Its function is as follows. O-methyltransferase that catalyzes the 2 O-methylation steps in the ubiquinone biosynthetic pathway. In Bordetella avium (strain 197N), this protein is Ubiquinone biosynthesis O-methyltransferase.